Consider the following 367-residue polypeptide: NADH-quinone oxidoreductase subunit D (367 aa).

Belongs to the complex I 49 kDa subunit family. As to quaternary structure, NDH-1 is composed of 14 different subunits. Subunits NuoB, C, D, E, F, and G constitute the peripheral sector of the complex.

The protein localises to the cell membrane. The enzyme catalyses a quinone + NADH + 5 H(+)(in) = a quinol + NAD(+) + 4 H(+)(out). Functionally, NDH-1 shuttles electrons from NADH, via FMN and iron-sulfur (Fe-S) centers, to quinones in the respiratory chain. The immediate electron acceptor for the enzyme in this species is believed to be ubiquinone. Couples the redox reaction to proton translocation (for every two electrons transferred, four hydrogen ions are translocated across the cytoplasmic membrane), and thus conserves the redox energy in a proton gradient. The polypeptide is NADH-quinone oxidoreductase subunit D (Dehalococcoides mccartyi (strain CBDB1)).